The following is a 213-amino-acid chain: Octanoyltransferase (213 aa).

One can recognise a BPL/LPL catalytic domain in the interval E32–P207. Substrate is bound by residues R71–H78, S138–G140, and G151–A153. C169 serves as the catalytic Acyl-thioester intermediate.

It belongs to the LipB family.

The protein resides in the cytoplasm. It catalyses the reaction octanoyl-[ACP] + L-lysyl-[protein] = N(6)-octanoyl-L-lysyl-[protein] + holo-[ACP] + H(+). It functions in the pathway protein modification; protein lipoylation via endogenous pathway; protein N(6)-(lipoyl)lysine from octanoyl-[acyl-carrier-protein]: step 1/2. Functionally, catalyzes the transfer of endogenously produced octanoic acid from octanoyl-acyl-carrier-protein onto the lipoyl domains of lipoate-dependent enzymes. Lipoyl-ACP can also act as a substrate although octanoyl-ACP is likely to be the physiological substrate. This chain is Octanoyltransferase, found in Salmonella paratyphi A (strain ATCC 9150 / SARB42).